A 367-amino-acid polypeptide reads, in one-letter code: B2 bradykinin receptor (367 aa).

Residues 1-36 (MLNLTSQVPEPALNGTLPQSSSCFHSDWWNWLNTIQ) are Extracellular-facing. N-linked (GlcNAc...) asparagine glycans are attached at residues Asn-3 and Asn-14. The chain crosses the membrane as a helical span at residues 37–60 (APFLWVLFLLAALENIFVLSVFCL). At 61 to 69 (HKNSCTVAE) the chain is on the cytoplasmic side. Residues 70–94 (IYLGNLAMADLILALGLPFWAITIA) form a helical membrane-spanning segment. At 95–107 (NHFDWLFGEVLCR) the chain is on the extracellular side. Cysteines 106 and 187 form a disulfide. A helical membrane pass occupies residues 108–129 (VVNTMIYMNLYSSICFLMLVSI). Residues 130 to 151 (DRYLALVKTMSMGRMRGVRWAK) lie on the Cytoplasmic side of the membrane. Tyr-132 carries the post-translational modification Phosphotyrosine. A helical membrane pass occupies residues 152 to 174 (LYSLVIWGCTLLLSSPMLAFRTM). Residues 175–197 (HEYAAEGHNVTACIIKYPSRSWM) are Extracellular-facing. A glycan (N-linked (GlcNAc...) asparagine) is linked at Asn-183. Residues 198–224 (VFTNILLNSVGFLLPLSIITYCTVQIL) form a helical membrane-spanning segment. Residues 225-243 (QVLRNNEMQKFKEIQTERK) lie on the Cytoplasmic side of the membrane. A helical transmembrane segment spans residues 244–268 (ATVLVLAVLLLFVVCWLPFQISTFL). The Extracellular segment spans residues 269–287 (DTLLRLGVLSGCWDEHAVD). The helical transmembrane segment at 288–311 (VITQISSYVAYSNSGLNPLVYVIV) threads the bilayer. Residues 312 to 367 (GKRFRKKSREVYRVLCQKGGCMGEPVQMENSMGTLRTSISVERQIHKLQDWAGKKQ) are Cytoplasmic-facing. Tyr-323 is modified (phosphotyrosine). Cys-327 carries the S-palmitoyl cysteine lipid modification. A Phosphoserine modification is found at Ser-342. A Phosphothreonine modification is found at Thr-345. Ser-349 and Ser-351 each carry phosphoserine; by GRK6.

It belongs to the G-protein coupled receptor 1 family. Bradykinin receptor subfamily. BDKRB2 sub-subfamily. Forms a complex with PECAM1 and GNAQ. Interacts with PECAM1.

The protein resides in the cell membrane. Its function is as follows. Receptor for bradykinin. It is associated with G proteins that activate a phosphatidylinositol-calcium second messenger system. In Sus scrofa (Pig), this protein is B2 bradykinin receptor (BDKRB2).